We begin with the raw amino-acid sequence, 320 residues long: Cytochrome f (320 aa).

A signal peptide spans 1–35 (MQNRNTFSWIKEQMTRSISVSIMIYVITRTAISNA). Residues Y36, C56, C59, and H60 each coordinate heme. The helical transmembrane segment at 286-306 (VQGLLFFLASVILAQIFLVLK) threads the bilayer.

This sequence belongs to the cytochrome f family. As to quaternary structure, the 4 large subunits of the cytochrome b6-f complex are cytochrome b6, subunit IV (17 kDa polypeptide, petD), cytochrome f and the Rieske protein, while the 4 small subunits are PetG, PetL, PetM and PetN. The complex functions as a dimer. Requires heme as cofactor.

It localises to the plastid. The protein localises to the chloroplast thylakoid membrane. Component of the cytochrome b6-f complex, which mediates electron transfer between photosystem II (PSII) and photosystem I (PSI), cyclic electron flow around PSI, and state transitions. This is Cytochrome f from Platanus occidentalis (Sycamore).